Reading from the N-terminus, the 129-residue chain is Large ribosomal subunit protein bL20 (129 aa).

This sequence belongs to the bacterial ribosomal protein bL20 family.

Its function is as follows. Binds directly to 23S ribosomal RNA and is necessary for the in vitro assembly process of the 50S ribosomal subunit. It is not involved in the protein synthesizing functions of that subunit. In Mycobacterium sp. (strain JLS), this protein is Large ribosomal subunit protein bL20.